Consider the following 109-residue polypeptide: uncharacterized protein (109 aa).

A run of 3 helical transmembrane segments spans residues 16-36 (YIPL…YYGL), 54-74 (TVYF…LLCL), and 80-100 (FCSS…TLAM).

It is found in the membrane. This is an uncharacterized protein from Schizosaccharomyces pombe (strain 972 / ATCC 24843) (Fission yeast).